Consider the following 181-residue polypeptide: Protein Syd (181 aa).

Belongs to the Syd family.

The protein localises to the cell inner membrane. In terms of biological role, interacts with the SecY protein in vivo. May bind preferentially to an uncomplexed state of SecY, thus functioning either as a chelating agent for excess SecY in the cell or as a regulatory factor that negatively controls the translocase function. This Alteromonas mediterranea (strain DSM 17117 / CIP 110805 / LMG 28347 / Deep ecotype) protein is Protein Syd.